Consider the following 210-residue polypeptide: Large ribosomal subunit protein uL4 (210 aa).

The segment at 46 to 89 (QGTASTLTRSEVRGGGRKPYKQKGTGRARQGSIRTPLRPGGGII) is disordered. Residues 60 to 71 (GGRKPYKQKGTG) are compositionally biased toward basic residues.

Belongs to the universal ribosomal protein uL4 family. As to quaternary structure, part of the 50S ribosomal subunit.

In terms of biological role, one of the primary rRNA binding proteins, this protein initially binds near the 5'-end of the 23S rRNA. It is important during the early stages of 50S assembly. It makes multiple contacts with different domains of the 23S rRNA in the assembled 50S subunit and ribosome. Forms part of the polypeptide exit tunnel. In Prochlorococcus marinus (strain MIT 9312), this protein is Large ribosomal subunit protein uL4.